The chain runs to 357 residues: Protein phosphatase 1 regulatory subunit 42 (357 aa).

7 LRR repeats span residues 29 to 50 (KITHINFSDKNIDAIEDLSLCK), 51 to 72 (NLSVLYLYDNCISQITNLNYAT), 73 to 94 (NLTHLYLQNNCIPCIENLRSLK), 95 to 116 (KLEKLYLGGNYIAVIEGLEGLG), 117 to 138 (ELRELHVENQRLPLGEKLLFDP), 147 to 168 (SLSILNISNNNIDDIRDLEILE), and 169 to 190 (NLNQLIAVDNQLLHVKDLEFLL). The 39-residue stretch at 204 to 242 (NPVCLKPKYRDRLILVSKSLEFLDGKEIKNIERQFLMNW) folds into the LRRCT domain.

Interacts with PPP1CC isoform gamma-2; the interaction is direct. Interacts with actin, dynein, KIF5B, KIFC1 and tubulin. Associates with microtubules. Post-translationally, phosphorylated; in the testis.

The protein resides in the cytoplasm. Its subcellular location is the cytoskeleton. It is found in the microtubule organizing center. It localises to the centrosome. Regulates phosphatase activity of protein phosphatase 1 (PP1) complexes in the testis. This Macaca fascicularis (Crab-eating macaque) protein is Protein phosphatase 1 regulatory subunit 42 (PPP1R42).